We begin with the raw amino-acid sequence, 603 residues long: Glutamyl-tRNA(Gln) amidotransferase subunit E (603 aa).

The protein belongs to the GatB/GatE family. GatE subfamily. In terms of assembly, heterodimer of GatD and GatE.

The enzyme catalyses L-glutamyl-tRNA(Gln) + L-glutamine + ATP + H2O = L-glutaminyl-tRNA(Gln) + L-glutamate + ADP + phosphate + H(+). Allows the formation of correctly charged Gln-tRNA(Gln) through the transamidation of misacylated Glu-tRNA(Gln) in organisms which lack glutaminyl-tRNA synthetase. The reaction takes place in the presence of glutamine and ATP through an activated gamma-phospho-Glu-tRNA(Gln). The GatDE system is specific for glutamate and does not act on aspartate. The sequence is that of Glutamyl-tRNA(Gln) amidotransferase subunit E from Thermoplasma acidophilum (strain ATCC 25905 / DSM 1728 / JCM 9062 / NBRC 15155 / AMRC-C165).